The sequence spans 603 residues: Elongation factor 4 (603 aa).

The tr-type G domain occupies 9–191 (SNIRNFSIIA…RIVRQIPPPK (183 aa)). Residues 21 to 26 (DHGKST) and 138 to 141 (NKID) contribute to the GTP site.

This sequence belongs to the TRAFAC class translation factor GTPase superfamily. Classic translation factor GTPase family. LepA subfamily.

The protein resides in the cell inner membrane. It carries out the reaction GTP + H2O = GDP + phosphate + H(+). In terms of biological role, required for accurate and efficient protein synthesis under certain stress conditions. May act as a fidelity factor of the translation reaction, by catalyzing a one-codon backward translocation of tRNAs on improperly translocated ribosomes. Back-translocation proceeds from a post-translocation (POST) complex to a pre-translocation (PRE) complex, thus giving elongation factor G a second chance to translocate the tRNAs correctly. Binds to ribosomes in a GTP-dependent manner. In Idiomarina loihiensis (strain ATCC BAA-735 / DSM 15497 / L2-TR), this protein is Elongation factor 4.